The primary structure comprises 66 residues: MAFLKKSLFLVLFLGLVSLSICDEEKRQDEDDDDDDDEEKRGVFDIIKGAGKQLIAHAMGKIAEKV.

The signal sequence occupies residues 1–22 (MAFLKKSLFLVLFLGLVSLSIC). A propeptide spanning residues 23–39 (DEEKRQDEDDDDDDDEE) is cleaved from the precursor. Val-66 is modified (valine amide).

In terms of tissue distribution, expressed by the skin glands.

The protein localises to the secreted. Functionally, has antibacterial activity against Gram-negative bacteria E.coli ATCC 25922 (MIC=80 uM), K.pneumoniae ATCC 700603 (MIC=310 uM) and S.choleraesuis ATCC 14028 (MIC=310 uM). Shows no hemolytic activity and no cytotoxicity. This chain is Ocellatin-PT4, found in Leptodactylus pustulatus (Ceara white-lipped frog).